Consider the following 269-residue polypeptide: Malonyl-[acyl-carrier protein] O-methyltransferase (269 aa).

It belongs to the methyltransferase superfamily.

It carries out the reaction malonyl-[ACP] + S-adenosyl-L-methionine = malonyl-[ACP] methyl ester + S-adenosyl-L-homocysteine. It participates in cofactor biosynthesis; biotin biosynthesis. Its function is as follows. Converts the free carboxyl group of a malonyl-thioester to its methyl ester by transfer of a methyl group from S-adenosyl-L-methionine (SAM). It allows to synthesize pimeloyl-ACP via the fatty acid synthetic pathway. This chain is Malonyl-[acyl-carrier protein] O-methyltransferase, found in Bacillus anthracis.